Here is a 117-residue protein sequence, read N- to C-terminus: Peptidyl-tRNA hydrolase (117 aa).

Belongs to the PTH2 family.

The protein localises to the cytoplasm. It catalyses the reaction an N-acyl-L-alpha-aminoacyl-tRNA + H2O = an N-acyl-L-amino acid + a tRNA + H(+). The natural substrate for this enzyme may be peptidyl-tRNAs which drop off the ribosome during protein synthesis. The polypeptide is Peptidyl-tRNA hydrolase (Thermoplasma acidophilum (strain ATCC 25905 / DSM 1728 / JCM 9062 / NBRC 15155 / AMRC-C165)).